A 315-amino-acid polypeptide reads, in one-letter code: Aspartate carbamoyltransferase catalytic subunit (315 aa).

Carbamoyl phosphate is bound by residues arginine 65 and threonine 66. Position 93 (lysine 93) interacts with L-aspartate. The carbamoyl phosphate site is built by arginine 115, histidine 145, and glutamine 148. The L-aspartate site is built by arginine 179 and arginine 234. The carbamoyl phosphate site is built by glycine 275 and proline 276.

Belongs to the aspartate/ornithine carbamoyltransferase superfamily. ATCase family. As to quaternary structure, heterododecamer (2C3:3R2) of six catalytic PyrB chains organized as two trimers (C3), and six regulatory PyrI chains organized as three dimers (R2).

It carries out the reaction carbamoyl phosphate + L-aspartate = N-carbamoyl-L-aspartate + phosphate + H(+). It functions in the pathway pyrimidine metabolism; UMP biosynthesis via de novo pathway; (S)-dihydroorotate from bicarbonate: step 2/3. Catalyzes the condensation of carbamoyl phosphate and aspartate to form carbamoyl aspartate and inorganic phosphate, the committed step in the de novo pyrimidine nucleotide biosynthesis pathway. This is Aspartate carbamoyltransferase catalytic subunit from Xanthomonas axonopodis pv. citri (strain 306).